A 130-amino-acid polypeptide reads, in one-letter code: Small ribosomal subunit protein uS8 (130 aa).

Belongs to the universal ribosomal protein uS8 family. As to quaternary structure, part of the 30S ribosomal subunit. Contacts proteins S5 and S12.

In terms of biological role, one of the primary rRNA binding proteins, it binds directly to 16S rRNA central domain where it helps coordinate assembly of the platform of the 30S subunit. This Opitutus terrae (strain DSM 11246 / JCM 15787 / PB90-1) protein is Small ribosomal subunit protein uS8.